The primary structure comprises 413 residues: Probable tRNA sulfurtransferase (413 aa).

A THUMP domain is found at 61–171 (TRVLDRVTRV…EDGTYIFTEK (111 aa)). ATP-binding positions include 189–190 (ML), 214–215 (HF), arginine 275, glycine 297, and glutamine 306.

It belongs to the ThiI family.

The protein resides in the cytoplasm. It catalyses the reaction [ThiI sulfur-carrier protein]-S-sulfanyl-L-cysteine + a uridine in tRNA + 2 reduced [2Fe-2S]-[ferredoxin] + ATP + H(+) = [ThiI sulfur-carrier protein]-L-cysteine + a 4-thiouridine in tRNA + 2 oxidized [2Fe-2S]-[ferredoxin] + AMP + diphosphate. The catalysed reaction is [ThiS sulfur-carrier protein]-C-terminal Gly-Gly-AMP + S-sulfanyl-L-cysteinyl-[cysteine desulfurase] + AH2 = [ThiS sulfur-carrier protein]-C-terminal-Gly-aminoethanethioate + L-cysteinyl-[cysteine desulfurase] + A + AMP + 2 H(+). The protein operates within cofactor biosynthesis; thiamine diphosphate biosynthesis. Functionally, catalyzes the ATP-dependent transfer of a sulfur to tRNA to produce 4-thiouridine in position 8 of tRNAs, which functions as a near-UV photosensor. Also catalyzes the transfer of sulfur to the sulfur carrier protein ThiS, forming ThiS-thiocarboxylate. This is a step in the synthesis of thiazole, in the thiamine biosynthesis pathway. The sulfur is donated as persulfide by IscS. This Natranaerobius thermophilus (strain ATCC BAA-1301 / DSM 18059 / JW/NM-WN-LF) protein is Probable tRNA sulfurtransferase.